The primary structure comprises 223 residues: von Willebrand factor C domain-containing protein 2-like (223 aa).

Residues 1–21 (MGPFLPAICVVLLALNAAVSP) form the signal peptide. 2 consecutive VWFC domains span residues 51–110 (KGCV…PECK) and 114–172 (NFCE…PICK).

It localises to the secreted. Its subcellular location is the synapse. Functionally, may play a role in bone differentiation and matrix mineralization. May play a role in neural development. The sequence is that of von Willebrand factor C domain-containing protein 2-like (vwc2l) from Danio rerio (Zebrafish).